The primary structure comprises 178 residues: Bifunctional protein PyrR (178 aa).

Residues 42 to 43, Arg-83, 103 to 111, Arg-136, and Val-160 each bind substrate; these read TR and DDVIYKGRT. A PRPP-binding motif is present at residues 99–111; that stretch reads VVLVDDVIYKGRT.

The protein belongs to the purine/pyrimidine phosphoribosyltransferase family. PyrR subfamily.

The enzyme catalyses UMP + diphosphate = 5-phospho-alpha-D-ribose 1-diphosphate + uracil. Its function is as follows. Regulates the transcription of the pyrimidine nucleotide (pyr) operon in response to exogenous pyrimidines. Also displays a weak uracil phosphoribosyltransferase activity which is not physiologically significant. This Synechocystis sp. (strain ATCC 27184 / PCC 6803 / Kazusa) protein is Bifunctional protein PyrR.